We begin with the raw amino-acid sequence, 1951 residues long: Sodium channel protein type 3 subunit alpha (1951 aa).

The Cytoplasmic portion of the chain corresponds to 1–128 (MAQALLVPPG…KIAIKILVHS (128 aa)). Positions 28–60 (RAAEEKAKKPKKEQDIDDENKPKPNSDLEAGKN) are disordered. Residues 46–57 (ENKPKPNSDLEA) show a composition bias toward basic and acidic residues. The I repeat unit spans residues 110–455 (ILTPLNPVRK…QQMLEQLKKQ (346 aa)). The helical transmembrane segment at 129-146 (LFSMLIMCTILTNCVFMT) threads the bilayer. Residues 147-152 (LSNPPD) are Extracellular-facing. A helical membrane pass occupies residues 153–174 (WTKNVEYTFTGIYTFESLIKIL). Residues 175 to 188 (ARGFCLEDFTFLRD) lie on the Cytoplasmic side of the membrane. Residues 189 to 206 (PWNWLDFSVIVMAYVTEF) traverse the membrane as a helical segment. Topologically, residues 207-213 (VDLGNVS) are extracellular. A glycan (N-linked (GlcNAc...) asparagine) is linked at Asn-211. The helical transmembrane segment at 214–235 (ALRTFRVLRALKTISVIPGLKT) threads the bilayer. The Cytoplasmic segment spans residues 236–249 (IVGALIQSVKKLSD). The chain crosses the membrane as a helical span at residues 250–269 (VMILTVFCLSVFALIGLQLF). The Extracellular segment spans residues 270–369 (MGNLRNKCSQ…NYGYTSFDTF (100 aa)). 5 N-linked (GlcNAc...) asparagine glycosylation sites follow: Asn-290, Asn-296, Asn-302, Asn-307, and Asn-339. An intramembrane region (pore-forming) is located at residues 370–386 (SWAFLSLFRLMTQDYWE). Over 387–397 (NLYQLTLRAAG) the chain is Extracellular. The chain crosses the membrane as a helical span at residues 398 to 424 (KTYMIFFVLVIFLGSFYLVNLILAVVA). Topologically, residues 425-712 (MAYEEQNQAT…LVNLIVMDPF (288 aa)) are cytoplasmic. Phosphoserine is present on residues Ser-484, Ser-485, and Ser-486. Disordered regions lie at residues 493–529 (SKSA…SESE) and 587–633 (VGSE…TEVR). Basic residues predominate over residues 500-509 (RNRRKKRRQR). Composition is skewed to basic and acidic residues over residues 510-529 (EHLE…SESE) and 596-622 (DEHS…ERRN). An II repeat occupies 693–965 (CCDAWLKVKH…QIAVGRMQKG (273 aa)). Residues 713 to 730 (VDLAITICIVLNTLFMAM) form a helical membrane-spanning segment. The Extracellular segment spans residues 731–738 (EHYPMTQQ). The chain crosses the membrane as a helical span at residues 739–763 (FSSVLTVGNLVFTGIFTAEMVLKII). Topologically, residues 764–773 (AMDPYYYFQE) are cytoplasmic. Residues 774–793 (GWNIFDGIIVSLSLMELGLA) traverse the membrane as a helical segment. Residues 794–797 (NVEG) lie on the Extracellular side of the membrane. The chain crosses the membrane as a helical span at residues 798-816 (LSVLRSFRLLRVFKLAKSW). Topologically, residues 817–834 (PTLNMLIKIIGNSVGALG) are cytoplasmic. The chain crosses the membrane as a helical span at residues 835-855 (NLTLVLAIIVFIFAVVGMQLF). The Extracellular portion of the chain corresponds to 856–880 (GKSYKECVCKINVDCKLPRWHMNDF). Cys-864 and Cys-870 are joined by a disulfide. The pore-forming intramembrane region spans 881 to 896 (FHSFLIVFRVLCGEWI). Over 897–907 (ETMWDCMEVAG) the chain is Extracellular. A disulfide bond links Cys-902 and Cys-911. A helical transmembrane segment spans residues 908–934 (QTMCLIVFMLVMVIGNLVVLNLFLALL). The Cytoplasmic portion of the chain corresponds to 935-1156 (LSSFSSDNLA…RKTCYSIVEH (222 aa)). A disordered region spans residues 1068–1112 (TEEFSSESELEESKEKLNATSSSEGSTVDVAPPREGEQAEIEPEE). An III repeat occupies 1139 to 1450 (KGKIWWNLRK…KKYYNAMKKL (312 aa)). Residues 1157–1177 (NWFETFIVFMILLSSGALAFE) traverse the membrane as a helical segment. Residues 1178-1189 (DIYIEQRKTIKT) lie on the Extracellular side of the membrane. The chain crosses the membrane as a helical span at residues 1190–1211 (MLEYADKVFTYIFILEMLLKWV). The Cytoplasmic portion of the chain corresponds to 1212–1217 (AYGFQT). A helical membrane pass occupies residues 1218-1243 (YFTNAWCWLDFLIVDVSLVSLVANAL). The Extracellular segment spans residues 1244-1252 (GYSELGAIK). The helical transmembrane segment at 1253 to 1271 (SLRTLRALRPLRALSRFEG) threads the bilayer. Residues 1272-1284 (MRVVVNALVGAIP) are Cytoplasmic-facing. The helical transmembrane segment at 1285 to 1307 (SIMNVLLVCLIFWLIFSIMGVNL) threads the bilayer. Over 1308 to 1353 (FAGKFYHCVNTTTGNMFEIKEVNNFSDCQALGKQARWKNVKVNFDN) the chain is Extracellular. Residues Cys-1315 and Cys-1335 are joined by a disulfide bond. Residues Asn-1317 and Asn-1331 are each glycosylated (N-linked (GlcNAc...) asparagine). The segment at residues 1354 to 1370 (VGAGYLALLQVATFKGW) is an intramembrane region (pore-forming). Topologically, residues 1371-1393 (MDIMYAAVDSRDVKLQPIYEENL) are extracellular. Residues 1394–1419 (YMYLYFVIFIIFGSFFTLNLFIGVII) traverse the membrane as a helical segment. The Cytoplasmic portion of the chain corresponds to 1420–1477 (DNFNQQKKKFGGQDIFMTEEQKKYYNAMKKLGSKKPQKPIPRPANKFQGMVFDFVTRQ). Ser-1452 is modified (phosphoserine; by PKC). An IV repeat occupies 1459–1757 (IPRPANKFQG…WEKFDPDATQ (299 aa)). A helical transmembrane segment spans residues 1478–1496 (VFDISIMILICLNMVTMMV). Residues 1497 to 1504 (ETDDQSKY) are Extracellular-facing. Residues 1505-1528 (MTLVLSRINLVFIVLFTGEFLLKL) traverse the membrane as a helical segment. Residues 1529-1538 (ISLRYYYFTI) lie on the Cytoplasmic side of the membrane. A helical membrane pass occupies residues 1539–1556 (GWNIFDFVVVILSIVGMF). At 1557-1568 (LAELIEKYFVSP) the chain is on the extracellular side. The chain crosses the membrane as a helical span at residues 1569–1591 (TLFRVIRLARIGRILRLIKGAKG). The Cytoplasmic portion of the chain corresponds to 1592-1604 (IRTLLFALMMSLP). A helical membrane pass occupies residues 1605 to 1628 (ALFNIGLLLFLVMFIYAIFGMSNF). Residues 1629 to 1650 (AYVKKEAGIDDMFNFETFGNSM) lie on the Extracellular side of the membrane. The segment at residues 1651–1663 (ICLFQITTSAGWD) is an intramembrane region (pore-forming). The Extracellular segment spans residues 1664 to 1695 (GLLAPILNSAPPDCDPDAIHPGSSVKGDCGNP). The helical transmembrane segment at 1696 to 1721 (SVGIFFFVSYIIISFLVVVNMYIAVI) threads the bilayer. At 1722–1951 (LENFSVATEE…KGKEVRENQK (230 aa)) the chain is on the cytoplasmic side. Positions 1851–1880 (EEVSAAIIQRNYRCYLLKQRLKNISSKYDK) constitute an IQ domain. A disordered region spans residues 1898–1951 (DKLNGNSTPEKTDGSSSTTSPPSYDSVTKPDKEKFEKDKPEKEIKGKEVRENQK). The segment covering 1925–1951 (TKPDKEKFEKDKPEKEIKGKEVRENQK) has biased composition (basic and acidic residues).

This sequence belongs to the sodium channel (TC 1.A.1.10) family. Nav1.3/SCN3A subfamily. In terms of assembly, heterooligomer of an alpha subunit, SCN3A, and 1 to 3 regulatory beta subunits including SCN1B and SCN2B; disulfide-linked with some beta subunits like SCN2B. Interacts with NEDD4L; could regulate expression of SCN3A at the plasma membrane through ubiquitination-regulated endocytosis. Interacts with the conotoxin GVIIJ. Interacts with the spider beta/delta-theraphotoxin-Pre1a. Interacts with the spider RTX-VII toxin (AC P0DL75). May be ubiquitinated by NEDD4L; which would promote its endocytosis. Post-translationally, phosphorylation at Ser-1452 by PKC in a highly conserved cytoplasmic loop slows inactivation of the sodium channel and reduces peak sodium currents.

It localises to the cell membrane. Its subcellular location is the basal cell membrane. It catalyses the reaction Na(+)(in) = Na(+)(out). Pore-forming subunit of Nav1.3, a voltage-gated sodium (Nav) channel that directly mediates the depolarizing phase of action potentials in excitable membranes. Navs, also called VGSCs (voltage-gated sodium channels) or VDSCs (voltage-dependent sodium channels), operate by switching between closed and open conformations depending on the voltage difference across the membrane. In the open conformation they allow Na(+) ions to selectively pass through the pore, along their electrochemical gradient. The influx of Na+ ions provokes membrane depolarization, initiating the propagation of electrical signals throughout cells and tissues. In some secretory cell types, it also participates in cell excitability through membrane depolarization and regulates cells responsiveness to stimuli triggering secretion. For instance, it controls the release of serotonin/5-hydroxytryptamine by enterochromaffin cells and is required for both glucagon- and glucose-induced insulin secretion in pancreatic endocrine cells. This chain is Sodium channel protein type 3 subunit alpha, found in Rattus norvegicus (Rat).